We begin with the raw amino-acid sequence, 209 residues long: Uracil phosphoribosyltransferase (209 aa).

Residues Arg79, Arg104, and 131–139 (DPMLATGGS) contribute to the 5-phospho-alpha-D-ribose 1-diphosphate site. Uracil contacts are provided by residues Ile194 and 199 to 201 (GDA). 5-phospho-alpha-D-ribose 1-diphosphate is bound at residue Asp200.

The protein belongs to the UPRTase family. Mg(2+) is required as a cofactor.

It carries out the reaction UMP + diphosphate = 5-phospho-alpha-D-ribose 1-diphosphate + uracil. The protein operates within pyrimidine metabolism; UMP biosynthesis via salvage pathway; UMP from uracil: step 1/1. Its activity is regulated as follows. Allosterically activated by GTP. In terms of biological role, catalyzes the conversion of uracil and 5-phospho-alpha-D-ribose 1-diphosphate (PRPP) to UMP and diphosphate. This Francisella tularensis subsp. novicida (strain U112) protein is Uracil phosphoribosyltransferase.